We begin with the raw amino-acid sequence, 144 residues long: MLPGLAMSLSMDSFSVWMRKNLKSAYEGLVTQDIDFVFLSKKKKVFFFVEEKNSLNAKLRLPQRVIFMLFNEFLINDLSEWKFLGTDVLYVLEDGTVYFLNDKNEKVRVNIEDYIVYKLENYKIFKDFQIEEYMLKMLWDCRKN.

This is an uncharacterized protein from Archaeoglobus fulgidus (strain ATCC 49558 / DSM 4304 / JCM 9628 / NBRC 100126 / VC-16).